Here is a 410-residue protein sequence, read N- to C-terminus: Histone-lysine N-methyltransferase SUV39H2 (410 aa).

A Chromo domain is found at 47 to 105; the sequence is YEVEYLCDYKVVKDMEYYLVKWKGWPDSTNTWEPLQNLKCPLLLQQFSNDKHNYLSQVK. The region spanning 189–247 is the Pre-SET domain; it reads FGCSCTDCFFQKCCPAEAGVLLAYNKNQQIKIPPGTPIYECNSRCQCGPDCPNRIVQKG. Residues Cys191, Cys193, Cys196, Cys201, Cys202, Cys229, Cys233, Cys235, and Cys239 each coordinate Zn(2+). Residues 250–373 enclose the SET domain; that stretch reads YSLCIFRTSN…AGEELTFDYQ (124 aa). S-adenosyl-L-methionine contacts are provided by residues 261-263, Tyr304, and 330-331; these read RGW and NH. Residue Cys333 coordinates Zn(2+). Ser381, Ser384, and Ser388 each carry phosphoserine. The Post-SET domain occupies 394-410; sequence VRTVCKCGAVTCRGYLN. Positions 398, 400, and 405 each coordinate Zn(2+).

This sequence belongs to the class V-like SAM-binding methyltransferase superfamily. Histone-lysine methyltransferase family. Suvar3-9 subfamily. Interacts with SMAD5. The large PER complex involved in the histone methylation is composed of at least PER2, CBX3, TRIM28, SUV39H1 and/or SUV39H2; CBX3 mediates the formation of the complex. Post-translationally, ubiquitinated by the DCX(DCAF13) E3 ubiquitin ligase complex, leading to its degradation.

Its subcellular location is the nucleus. The protein localises to the chromosome. It is found in the centromere. It carries out the reaction L-lysyl(9)-[histone H3] + 3 S-adenosyl-L-methionine = N(6),N(6),N(6)-trimethyl-L-lysyl(9)-[histone H3] + 3 S-adenosyl-L-homocysteine + 3 H(+). Functionally, histone methyltransferase that specifically trimethylates 'Lys-9' of histone H3 using monomethylated H3 'Lys-9' as substrate. H3 'Lys-9' trimethylation represents a specific tag for epigenetic transcriptional repression by recruiting HP1 (CBX1, CBX3 and/or CBX5) proteins to methylated histones. Mainly functions in heterochromatin regions, thereby playing a central role in the establishment of constitutive heterochromatin at pericentric and telomere regions. H3 'Lys-9' trimethylation is also required to direct DNA methylation at pericentric repeats. SUV39H1 is targeted to histone H3 via its interaction with RB1 and is involved in many processes, such as cell cycle regulation, transcriptional repression and regulation of telomere length. May participate in regulation of higher-order chromatin organization during spermatogenesis. Recruited by the large PER complex to the E-box elements of the circadian target genes such as PER2 itself or PER1, contributes to the conversion of local chromatin to a heterochromatin-like repressive state through H3 'Lys-9' trimethylation. The polypeptide is Histone-lysine N-methyltransferase SUV39H2 (SUV39H2) (Macaca fascicularis (Crab-eating macaque)).